We begin with the raw amino-acid sequence, 355 residues long: Phenylalanine--tRNA ligase alpha subunit (355 aa).

A Mg(2+)-binding site is contributed by Glu-273.

The protein belongs to the class-II aminoacyl-tRNA synthetase family. Phe-tRNA synthetase alpha subunit type 1 subfamily. Tetramer of two alpha and two beta subunits. The cofactor is Mg(2+).

The protein resides in the cytoplasm. It catalyses the reaction tRNA(Phe) + L-phenylalanine + ATP = L-phenylalanyl-tRNA(Phe) + AMP + diphosphate + H(+). In Bifidobacterium longum (strain NCC 2705), this protein is Phenylalanine--tRNA ligase alpha subunit.